A 125-amino-acid polypeptide reads, in one-letter code: Small ribosomal subunit protein uS12 (125 aa).

The interval 1–31 (MPTINQLVRQGREVETTKSKSPAMQNSPQRR) is disordered. Residues 19 to 29 (SKSPAMQNSPQ) show a composition bias toward polar residues. Asp89 bears the 3-methylthioaspartic acid mark.

Belongs to the universal ribosomal protein uS12 family. As to quaternary structure, part of the 30S ribosomal subunit. Contacts proteins S8 and S17. May interact with IF1 in the 30S initiation complex.

With S4 and S5 plays an important role in translational accuracy. In terms of biological role, interacts with and stabilizes bases of the 16S rRNA that are involved in tRNA selection in the A site and with the mRNA backbone. Located at the interface of the 30S and 50S subunits, it traverses the body of the 30S subunit contacting proteins on the other side and probably holding the rRNA structure together. The combined cluster of proteins S8, S12 and S17 appears to hold together the shoulder and platform of the 30S subunit. The chain is Small ribosomal subunit protein uS12 from Paracidovorax citrulli (strain AAC00-1) (Acidovorax citrulli).